A 576-amino-acid polypeptide reads, in one-letter code: Aspartate--tRNA ligase (576 aa).

An L-aspartate-binding site is contributed by glutamate 173. Residues 197 to 200 (QLFK) are aspartate. L-aspartate is bound at residue arginine 219. ATP is bound by residues 219–221 (RDE) and glutamine 228. Histidine 438 provides a ligand contact to L-aspartate. Glutamate 470 contributes to the ATP binding site. Residue arginine 477 coordinates L-aspartate. 522 to 525 (GLDR) provides a ligand contact to ATP.

Belongs to the class-II aminoacyl-tRNA synthetase family. Type 1 subfamily. Homodimer.

It is found in the cytoplasm. The enzyme catalyses tRNA(Asp) + L-aspartate + ATP = L-aspartyl-tRNA(Asp) + AMP + diphosphate. Catalyzes the attachment of L-aspartate to tRNA(Asp) in a two-step reaction: L-aspartate is first activated by ATP to form Asp-AMP and then transferred to the acceptor end of tRNA(Asp). The protein is Aspartate--tRNA ligase of Aster yellows witches'-broom phytoplasma (strain AYWB).